A 726-amino-acid polypeptide reads, in one-letter code: Catalase-peroxidase (726 aa).

Residues 1–33 (MSTTDDTHNTLSTGKCPFHQGGHDRSAGAGTAS) are disordered. Residues 105-226 (WHGAGTYRSI…LGATEMGLIY (122 aa)) constitute a cross-link (tryptophyl-tyrosyl-methioninium (Trp-Tyr) (with M-252)). His106 acts as the Proton acceptor in catalysis. Positions 226-252 (YVNPEGPDHSGEPLSAAAAIRATFGNM) form a cross-link, tryptophyl-tyrosyl-methioninium (Tyr-Met) (with W-105). His267 contacts heme b.

Belongs to the peroxidase family. Peroxidase/catalase subfamily. As to quaternary structure, homodimer or homotetramer. Heme b is required as a cofactor. Post-translationally, formation of the three residue Trp-Tyr-Met cross-link is important for the catalase, but not the peroxidase activity of the enzyme.

It carries out the reaction H2O2 + AH2 = A + 2 H2O. The enzyme catalyses 2 H2O2 = O2 + 2 H2O. In terms of biological role, bifunctional enzyme with both catalase and broad-spectrum peroxidase activity. This Salmonella paratyphi B (strain ATCC BAA-1250 / SPB7) protein is Catalase-peroxidase.